A 160-amino-acid chain; its full sequence is General odorant-binding protein 2 (160 aa).

Positions 1–20 (MFSFLILVFVASVADSVIGT) are cleaved as a signal peptide. 3 cysteine pairs are disulfide-bonded: Cys38-Cys73, Cys69-Cys127, and Cys116-Cys136.

The protein belongs to the PBP/GOBP family. In terms of assembly, homodimer. In terms of tissue distribution, detected in antenna (at protein level). Expressed at high levels in antenna.

Its function is as follows. Present in the aqueous fluid surrounding olfactory sensory dendrites and are thought to aid in the capture and transport of hydrophobic odorants into and through this fluid. The protein is General odorant-binding protein 2 of Bombyx mori (Silk moth).